The primary structure comprises 254 residues: MTTISVIKVSGHELDDPTFLGGLTAALRGFQQPLVLVHGGGKEISAAVERAGLQIEFVDGLRVTSPAVMDIMQMVVCGTINKRIVTALVNAGVKAIGLSGLDLGLLRCEPYRPAGRDLGRVGEVTAVDGAALLHLLALGWMPVIAPVALGATDGLSYNVNADMVAEAVAGALAGAELVFVSNVPGVLVDGRVVPALTPAAVEELIANGVISGGMIPKVRAALAALQRGASSVRIVNLAGLHDGGTRFTHGELSE.

Substrate-binding positions include 40 to 41, Arg-62, and Asn-158; that span reads GG.

It belongs to the acetylglutamate kinase family. ArgB subfamily.

The protein resides in the cytoplasm. It carries out the reaction N-acetyl-L-glutamate + ATP = N-acetyl-L-glutamyl 5-phosphate + ADP. The protein operates within amino-acid biosynthesis; L-arginine biosynthesis; N(2)-acetyl-L-ornithine from L-glutamate: step 2/4. Catalyzes the ATP-dependent phosphorylation of N-acetyl-L-glutamate. This is Acetylglutamate kinase from Chloroflexus aurantiacus (strain ATCC 29366 / DSM 635 / J-10-fl).